The primary structure comprises 373 residues: Transaldolase (373 aa).

The active-site Schiff-base intermediate with substrate is K143.

Belongs to the transaldolase family. Type 2 subfamily.

It is found in the cytoplasm. It carries out the reaction D-sedoheptulose 7-phosphate + D-glyceraldehyde 3-phosphate = D-erythrose 4-phosphate + beta-D-fructose 6-phosphate. Its pathway is carbohydrate degradation; pentose phosphate pathway; D-glyceraldehyde 3-phosphate and beta-D-fructose 6-phosphate from D-ribose 5-phosphate and D-xylulose 5-phosphate (non-oxidative stage): step 2/3. Transaldolase is important for the balance of metabolites in the pentose-phosphate pathway. In Mycobacterium marinum (strain ATCC BAA-535 / M), this protein is Transaldolase.